The following is a 1062-amino-acid chain: Platelet-derived growth factor receptor alpha (1062 aa).

The N-terminal stretch at 1–27 (MFPPSSAPLLLPQLEELVVPLHTAFTL) is a signal peptide. 5 consecutive Ig-like C2-type domains span residues 28 to 96 (TCQG…VYVP), 91 to 184 (IYVY…VHGW), 190 to 281 (LHVE…KQIA), 287 to 381 (SEFM…RTVS), and 389 to 493 (PAVI…IKLV). Residues 28–504 (TCQGEATIAW…NGPHPELTVA (477 aa)) lie on the Extracellular side of the membrane. Cys-29 and Cys-74 are joined by a disulfide. N-linked (GlcNAc...) asparagine glycosylation is found at Asn-79 and Asn-132. Intrachain disulfides connect Cys-124-Cys-165 and Cys-211-Cys-265. 5 N-linked (GlcNAc...) asparagine glycosylation sites follow: Asn-273, Asn-333, Asn-366, Asn-433, and Asn-444. Cys-410 and Cys-477 are joined by a disulfide. Residues 505–525 (AAVLVLLVIVIISLIVLVVIW) traverse the membrane as a helical segment. Residues 526-1062 (KQKPRYEIRW…CSDLVEDSFL (537 aa)) are Cytoplasmic-facing. Tyr-548 and Tyr-550 each carry phosphotyrosine; by autocatalysis. Residues 569 to 945 (LVLGRILGSG…HYERVNHEFL (377 aa)) enclose the Protein kinase domain. Residues 575–583 (LGSGAFGKV) and Lys-603 each bind ATP. Tyr-697, Tyr-708, Tyr-719, Tyr-731, and Tyr-739 each carry phosphotyrosine; by autocatalysis. The interval 734-754 (LQGSNYDHPPSQKGSNDGEMD) is disordered. The Proton acceptor role is filled by Asp-793. A phosphotyrosine; by autocatalysis mark is found at Tyr-824 and Tyr-963. Positions 975–986 (KDRESGFDEQRL) are enriched in basic and acidic residues. The segment at 975–1034 (KDRESGFDEQRLSSDSGYIIPLPDLDPISDEEYGKRNRHSSQTSEESAIETGSSSSTFAK) is disordered. A Phosphotyrosine; by autocatalysis modification is found at Tyr-992. Residues 1014–1032 (SSQTSEESAIETGSSSSTF) show a composition bias toward polar residues.

The protein belongs to the protein kinase superfamily. Tyr protein kinase family. CSF-1/PDGF receptor subfamily. Interacts with homodimeric pdgfa, pdgfb and pdgfc, and with heterodimers formed by pdgfa and pdgfb. monomer in the absence of bound ligand. Interaction with dimeric pdgfa, pdgfb and/or pdgfc leads to receptor dimerization, where both pdgfra homodimers and heterodimers with pdgfrb are observed. Post-translationally, ubiquitinated, leading to its degradation. In terms of processing, autophosphorylated on tyrosine residues upon ligand binding. Autophosphorylation occurs in trans, i.e. one subunit of the dimeric receptor phosphorylates tyrosine residues on the other subunit.

It localises to the cell membrane. It catalyses the reaction L-tyrosyl-[protein] + ATP = O-phospho-L-tyrosyl-[protein] + ADP + H(+). Its activity is regulated as follows. Present in an inactive conformation in the absence of bound ligand. Binding of pdgfa and/or pdgfb leads to dimerization and activation by autophosphorylation on tyrosine residues. Tyrosine-protein kinase that acts as a cell-surface receptor for pdgfa, pdgfb and pdgfc and plays an essential role in the regulation of embryonic development, cell proliferation, survival and chemotaxis. Depending on the context, promotes or inhibits cell proliferation and cell migration. Plays an important role in the differentiation of bone marrow-derived mesenchymal stem cells. Required for normal skeleton development. Required for normal development of the gastrointestinal tract. Plays a role in cell migration and chemotaxis in wound healing. Plays a role in platelet activation, secretion of agonists from platelet granules, and in thrombin-induced platelet aggregation. Binding of its cognate ligands - homodimeric pdgfa, homodimeric pdgfb, heterodimers formed by pdgfa and pdgfb or homodimeric pdgfc -leads to the activation of several signaling cascades; the response depends on the nature of the bound ligand and is modulated by the formation of heterodimers between pdgfra and pdgfrb. Phosphorylates pik3r1, plcg1, and ptpn11. Activation of plcg1 leads to the production of the cellular signaling molecules diacylglycerol and inositol 1,4,5-trisphosphate, mobilization of cytosolic Ca(2+) and the activation of protein kinase C. Phosphorylates pik3r1, the regulatory subunit of phosphatidylinositol 3-kinase, and thereby mediates activation of the AKT1 signaling pathway. Mediates activation of hras and of the MAP kinases mapk1/erk2 and/or mapk3/erk1. Promotes activation of STAT family members stat1, stat3 and stat5a and/or stat5b. Receptor signaling is down-regulated by protein phosphatases that dephosphorylate the receptor and its down-stream effectors, and by rapid internalization of the activated receptor. The sequence is that of Platelet-derived growth factor receptor alpha (pdgfra) from Takifugu rubripes (Japanese pufferfish).